The primary structure comprises 348 residues: Ketol-acid reductoisomerase (NADP(+)) (348 aa).

Positions 1 to 179 constitute a KARI N-terminal Rossmann domain; it reads MDVHYDADPA…GGTHAGVIET (179 aa). Residues 22–25, arginine 45, serine 48, serine 50, and 80–83 contribute to the NADP(+) site; these read YGSQ and DQHQ. Residue histidine 105 is part of the active site. Residue glycine 131 coordinates NADP(+). Residues 180–325 form the KARI C-terminal knotted domain; sequence TFKDETETDL…QTLRGMMPWL (146 aa). Residues aspartate 188, glutamate 192, glutamate 224, and glutamate 228 each contribute to the Mg(2+) site. Residue serine 249 coordinates substrate. The segment at 323–348 is disordered; sequence PWLNGDETSADEDAPDAADTAPASSS. Positions 339–348 are enriched in low complexity; the sequence is AADTAPASSS.

It belongs to the ketol-acid reductoisomerase family. It depends on Mg(2+) as a cofactor.

The catalysed reaction is (2R)-2,3-dihydroxy-3-methylbutanoate + NADP(+) = (2S)-2-acetolactate + NADPH + H(+). The enzyme catalyses (2R,3R)-2,3-dihydroxy-3-methylpentanoate + NADP(+) = (S)-2-ethyl-2-hydroxy-3-oxobutanoate + NADPH + H(+). It functions in the pathway amino-acid biosynthesis; L-isoleucine biosynthesis; L-isoleucine from 2-oxobutanoate: step 2/4. It participates in amino-acid biosynthesis; L-valine biosynthesis; L-valine from pyruvate: step 2/4. Functionally, involved in the biosynthesis of branched-chain amino acids (BCAA). Catalyzes an alkyl-migration followed by a ketol-acid reduction of (S)-2-acetolactate (S2AL) to yield (R)-2,3-dihydroxy-isovalerate. In the isomerase reaction, S2AL is rearranged via a Mg-dependent methyl migration to produce 3-hydroxy-3-methyl-2-ketobutyrate (HMKB). In the reductase reaction, this 2-ketoacid undergoes a metal-dependent reduction by NADPH to yield (R)-2,3-dihydroxy-isovalerate. The sequence is that of Ketol-acid reductoisomerase (NADP(+)) from Salinibacter ruber (strain DSM 13855 / M31).